The sequence spans 546 residues: CTP synthase (546 aa).

The segment at 1-264 (MRYIVVTGGV…TKYIMKAMRL (264 aa)) is amidoligase domain. Ser-12 serves as a coordination point for CTP. Ser-12 provides a ligand contact to UTP. ATP-binding positions include 13-18 (GLGKGI) and Asp-70. Residues Asp-70 and Glu-140 each coordinate Mg(2+). CTP is bound by residues 147–149 (DIE), 185–190 (KTKPTQ), and Lys-221. UTP-binding positions include 185–190 (KTKPTQ) and Lys-221. The 237-residue stretch at 298 to 534 (GSQCTDPMKD…VEAMKAQRLR (237 aa)) folds into the Glutamine amidotransferase type-1 domain. Gly-357 contributes to the L-glutamine binding site. The active-site Nucleophile; for glutamine hydrolysis is the Cys-384. Residues 385–388 (FGMQ), Glu-408, and Arg-464 contribute to the L-glutamine site. Active-site residues include His-507 and Glu-509.

This sequence belongs to the CTP synthase family. As to quaternary structure, homotetramer.

The enzyme catalyses UTP + L-glutamine + ATP + H2O = CTP + L-glutamate + ADP + phosphate + 2 H(+). It catalyses the reaction L-glutamine + H2O = L-glutamate + NH4(+). The catalysed reaction is UTP + NH4(+) + ATP = CTP + ADP + phosphate + 2 H(+). It functions in the pathway pyrimidine metabolism; CTP biosynthesis via de novo pathway; CTP from UDP: step 2/2. Its activity is regulated as follows. Allosterically activated by GTP, when glutamine is the substrate; GTP has no effect on the reaction when ammonia is the substrate. The allosteric effector GTP functions by stabilizing the protein conformation that binds the tetrahedral intermediate(s) formed during glutamine hydrolysis. Inhibited by the product CTP, via allosteric rather than competitive inhibition. Its function is as follows. Catalyzes the ATP-dependent amination of UTP to CTP with either L-glutamine or ammonia as the source of nitrogen. Regulates intracellular CTP levels through interactions with the four ribonucleotide triphosphates. This chain is CTP synthase, found in Methanothrix thermoacetophila (strain DSM 6194 / JCM 14653 / NBRC 101360 / PT) (Methanosaeta thermophila).